Here is a 109-residue protein sequence, read N- to C-terminus: Nucleoid-associated protein Asuc_0997 (109 aa).

The disordered stretch occupies residues 1-23 (MFGKGGLGGLMKQAQQMQERMQK).

This sequence belongs to the YbaB/EbfC family. In terms of assembly, homodimer.

The protein resides in the cytoplasm. The protein localises to the nucleoid. Functionally, binds to DNA and alters its conformation. May be involved in regulation of gene expression, nucleoid organization and DNA protection. The polypeptide is Nucleoid-associated protein Asuc_0997 (Actinobacillus succinogenes (strain ATCC 55618 / DSM 22257 / CCUG 43843 / 130Z)).